We begin with the raw amino-acid sequence, 1331 residues long: Mitogen-activated protein kinase kinase kinase 15 (1331 aa).

Gly residues predominate over residues 1–13 (MEGGGGSGGGGGP). The disordered stretch occupies residues 1 to 61 (MEGGGGSGGG…GEAEGGRGPR (61 aa)). Positions 656-912 (NGERVVLGKG…AADLLQEGFL (257 aa)) constitute a Protein kinase domain. ATP-binding positions include 662–670 (LGKGSYGIV) and Lys685. The active-site Proton acceptor is Asp777. Disordered stretches follow at residues 934–964 (GTGT…SDAQ) and 983–1005 (LSVP…EERD). Positions 940-962 (LPSSGELVGSSSSEHGSISPDSD) are enriched in low complexity. Residues 992 to 1005 (LDDRSTALPPEERD) are compositionally biased toward basic and acidic residues. A coiled-coil region spans residues 1216-1236 (LVQKEREYQNLLRLILDQKTQ).

The protein belongs to the protein kinase superfamily. STE Ser/Thr protein kinase family. MAP kinase kinase kinase subfamily. Requires Mg(2+) as cofactor.

The catalysed reaction is L-seryl-[protein] + ATP = O-phospho-L-seryl-[protein] + ADP + H(+). It carries out the reaction L-threonyl-[protein] + ATP = O-phospho-L-threonyl-[protein] + ADP + H(+). Its activity is regulated as follows. Contains an N-terminal autoinhibitory domain. Activated by phosphorylation at Thr-816, inhibited by phosphorylation at Ser-928. Functionally, serine/threonine kinase which acts as a component of the MAP kinase signal transduction pathway. Once activated, acts as an upstream activator of the p38 MAPK signal transduction cascade through the phosphorylation and activation of several MAP kinase kinases. May function in a signal transduction pathway that is activated by various cell stresses and leads to apoptosis. Involved in phosphorylation of WNK4 in response to osmotic stress or hypotonic low-chloride stimulation via the p38 MAPK signal transduction cascade. The sequence is that of Mitogen-activated protein kinase kinase kinase 15 from Mus musculus (Mouse).